The primary structure comprises 195 residues: Neurturin (195 aa).

The first 19 residues, 1–19 (MRRWKAAALVSLICSSLLS), serve as a signal peptide directing secretion. A propeptide spanning residues 20-95 (VWMCQEGLLL…RAGPRRRRAR (76 aa)) is cleaved from the precursor. 3 cysteine pairs are disulfide-bonded: Cys-101-Cys-163, Cys-128-Cys-192, and Cys-132-Cys-194. Arg-147, Arg-156, and Arg-158 together coordinate heparan sulfate group.

The protein belongs to the TGF-beta family. GDNF subfamily. In terms of assembly, homodimer; disulfide-linked. Interacts with GFRA2 coreceptor and RET: forms a 2:2:2 ternary complex composed of NRTN ligand, GFRA2 and RET receptor. Also forms a 4:4:4 tetrameric complex composed of 4 copies of NRTN ligand, GFRA2 and RET receptor, which prevents endocytosis of RET. Widespread distribution.

The protein localises to the secreted. Its function is as follows. Growth factor that supports the survival of sympathetic neurons in culture. May regulate the development and maintenance of the CNS. Involved in the development of the neural crest. Might control the size of non-neuronal cell population such as haemopoietic cells. Acts by binding to its coreceptor, GFRA2, leading to autophosphorylation and activation of the RET receptor. Heparan sulfate-binding is required for signaling. This Mus musculus (Mouse) protein is Neurturin (Nrtn).